A 491-amino-acid chain; its full sequence is Acetyl-coenzyme A carboxylase carboxyl transferase subunit beta, chloroplastic (491 aa).

Residues 26-49 form a disordered region; that stretch reads ARPRPIGNTNGSQDPSINDRDKNG. Residues 32-41 show a composition bias toward polar residues; it reads GNTNGSQDPS. One can recognise a CoA carboxyltransferase N-terminal domain in the interval 222-491; that stretch reads LWVQCDNCYG…PLNHNSQVKR (270 aa). Zn(2+) contacts are provided by Cys226, Cys229, Cys245, and Cys248. The C4-type zinc-finger motif lies at 226 to 248; the sequence is CDNCYGLNYKKIFSSKMNICEQC.

This sequence belongs to the AccD/PCCB family. Acetyl-CoA carboxylase is a heterohexamer composed of biotin carboxyl carrier protein, biotin carboxylase and 2 subunits each of ACCase subunit alpha and ACCase plastid-coded subunit beta (accD). Zn(2+) serves as cofactor.

It is found in the plastid. It localises to the chloroplast stroma. The catalysed reaction is N(6)-carboxybiotinyl-L-lysyl-[protein] + acetyl-CoA = N(6)-biotinyl-L-lysyl-[protein] + malonyl-CoA. It participates in lipid metabolism; malonyl-CoA biosynthesis; malonyl-CoA from acetyl-CoA: step 1/1. Functionally, component of the acetyl coenzyme A carboxylase (ACC) complex. Biotin carboxylase (BC) catalyzes the carboxylation of biotin on its carrier protein (BCCP) and then the CO(2) group is transferred by the transcarboxylase to acetyl-CoA to form malonyl-CoA. This Ceratophyllum demersum (Rigid hornwort) protein is Acetyl-coenzyme A carboxylase carboxyl transferase subunit beta, chloroplastic.